A 134-amino-acid chain; its full sequence is Cilia- and flagella-associated protein 144 (134 aa).

Positions Q76–D95 are disordered.

It belongs to the CFAP144 family. In terms of assembly, microtubule inner protein component of sperm flagellar doublet microtubules.

It localises to the cytoplasm. The protein resides in the cytoskeleton. The protein localises to the cilium axoneme. It is found in the flagellum axoneme. Functionally, microtubule inner protein (MIP) part of the dynein-decorated doublet microtubules (DMTs) in cilia axoneme, which is required for motile cilia beating. This is Cilia- and flagella-associated protein 144 from Homo sapiens (Human).